Consider the following 524-residue polypeptide: GMP synthase [glutamine-hydrolyzing] (524 aa).

Residues 10–199 enclose the Glutamine amidotransferase type-1 domain; that stretch reads PVLVVDFGAQ…LTEVAGLEQT (190 aa). Cys87 functions as the Nucleophile in the catalytic mechanism. Catalysis depends on residues His173 and Glu175. Positions 200–398 constitute a GMPS ATP-PPase domain; sequence WTSANIAQQL…LGLPEEIVAR (199 aa). Residue 228 to 234 coordinates ATP; the sequence is SGGVDSA.

Homodimer.

It catalyses the reaction XMP + L-glutamine + ATP + H2O = GMP + L-glutamate + AMP + diphosphate + 2 H(+). It functions in the pathway purine metabolism; GMP biosynthesis; GMP from XMP (L-Gln route): step 1/1. Its function is as follows. Catalyzes the synthesis of GMP from XMP. This Corynebacterium ammoniagenes (Brevibacterium ammoniagenes) protein is GMP synthase [glutamine-hydrolyzing] (guaA).